Consider the following 312-residue polypeptide: DNA-directed RNA polymerase subunit alpha (312 aa).

Positions 1 to 226 (MIEFEKPNIT…EHFKVFMSTD (226 aa)) are alpha N-terminal domain (alpha-NTD). An alpha C-terminal domain (alpha-CTD) region spans residues 243-312 (NEKKLEMTIE…ELGLSLRQDD (70 aa)).

This sequence belongs to the RNA polymerase alpha chain family. Homodimer. The RNAP catalytic core consists of 2 alpha, 1 beta, 1 beta' and 1 omega subunit. When a sigma factor is associated with the core the holoenzyme is formed, which can initiate transcription.

It catalyses the reaction RNA(n) + a ribonucleoside 5'-triphosphate = RNA(n+1) + diphosphate. Functionally, DNA-dependent RNA polymerase catalyzes the transcription of DNA into RNA using the four ribonucleoside triphosphates as substrates. This Lactobacillus gasseri (strain ATCC 33323 / DSM 20243 / BCRC 14619 / CIP 102991 / JCM 1131 / KCTC 3163 / NCIMB 11718 / NCTC 13722 / AM63) protein is DNA-directed RNA polymerase subunit alpha.